The chain runs to 160 residues: uncharacterized protein (160 aa).

It localises to the plastid. This is an uncharacterized protein from Euglena longa (Euglenophycean alga).